Here is a 158-residue protein sequence, read N- to C-terminus: MAEHHHTISGLVGKLVTELEVNCNADEYYKIFKHHEDLPNAIPHIYRGVKAVEGDRITSGFIKEWHYIIEGKPLTCKERTTYEDEARTIHHSTVEGVLLDDYKKFDATLVNPKADGHGSIVTWIVEYEKINEDSPVPISYLTFHKIIEDLNTYLCASD.

Belongs to the MLP family. In terms of tissue distribution, laticifer.

It is found in the vacuole. It localises to the cytoplasmic vesicle. Its function is as follows. Not known; MLPs constitute up to 50% of the soluble latex protein. This chain is Major latex protein 22 (MLP22), found in Papaver somniferum (Opium poppy).